Consider the following 62-residue polypeptide: Beta-defensin 37 (62 aa).

Positions 1 to 16 (MKFSYFLLLLLSLSNF) are cleaved as a signal peptide. 3 disulfides stabilise this stretch: C29–C58, C36–C51, and C41–C59.

Belongs to the beta-defensin family. Only expressed in epididymis (corpus and cauda).

It localises to the secreted. Functionally, has antibacterial activity. The protein is Beta-defensin 37 (Defb37) of Mus musculus (Mouse).